A 339-amino-acid polypeptide reads, in one-letter code: Ketol-acid reductoisomerase (NADP(+)) (339 aa).

The KARI N-terminal Rossmann domain maps to Met-1–Thr-182. NADP(+) is bound by residues Tyr-24–Gln-27, Arg-48, Ser-51, Thr-53, and Asp-83–Gln-86. His-108 is an active-site residue. Gly-134 is an NADP(+) binding site. Residues Thr-183–Ile-328 form the KARI C-terminal knotted domain. Mg(2+) is bound by residues Asp-191, Glu-195, Glu-227, and Glu-231. Ser-252 provides a ligand contact to substrate.

This sequence belongs to the ketol-acid reductoisomerase family. Requires Mg(2+) as cofactor.

It catalyses the reaction (2R)-2,3-dihydroxy-3-methylbutanoate + NADP(+) = (2S)-2-acetolactate + NADPH + H(+). The catalysed reaction is (2R,3R)-2,3-dihydroxy-3-methylpentanoate + NADP(+) = (S)-2-ethyl-2-hydroxy-3-oxobutanoate + NADPH + H(+). It functions in the pathway amino-acid biosynthesis; L-isoleucine biosynthesis; L-isoleucine from 2-oxobutanoate: step 2/4. The protein operates within amino-acid biosynthesis; L-valine biosynthesis; L-valine from pyruvate: step 2/4. Its function is as follows. Involved in the biosynthesis of branched-chain amino acids (BCAA). Catalyzes an alkyl-migration followed by a ketol-acid reduction of (S)-2-acetolactate (S2AL) to yield (R)-2,3-dihydroxy-isovalerate. In the isomerase reaction, S2AL is rearranged via a Mg-dependent methyl migration to produce 3-hydroxy-3-methyl-2-ketobutyrate (HMKB). In the reductase reaction, this 2-ketoacid undergoes a metal-dependent reduction by NADPH to yield (R)-2,3-dihydroxy-isovalerate. This Rhizorhabdus wittichii (strain DSM 6014 / CCUG 31198 / JCM 15750 / NBRC 105917 / EY 4224 / RW1) (Sphingomonas wittichii) protein is Ketol-acid reductoisomerase (NADP(+)).